Consider the following 165-residue polypeptide: Chorismate pyruvate-lyase (165 aa).

Residues M35, R77, L115, and E156 each contribute to the substrate site.

It belongs to the UbiC family. In terms of assembly, monomer.

The protein localises to the cytoplasm. It catalyses the reaction chorismate = 4-hydroxybenzoate + pyruvate. Its pathway is cofactor biosynthesis; ubiquinone biosynthesis. Its function is as follows. Removes the pyruvyl group from chorismate, with concomitant aromatization of the ring, to provide 4-hydroxybenzoate (4HB) for the ubiquinone pathway. The chain is Chorismate pyruvate-lyase from Salmonella gallinarum (strain 287/91 / NCTC 13346).